The primary structure comprises 4007 residues: PKS-NRPS hybrid synthetase psoA (4007 aa).

Residues 8 to 444 (KEPIAIIGTG…GTNCHAIVES (437 aa)) enclose the Ketosynthase family 3 (KS3) domain. Residues Cys-182, His-321, and His-364 each act as for beta-ketoacyl synthase activity in the active site. Residues 575-897 (VFTGQGAQWA…VLDRKADDIL (323 aa)) form a malonyl-CoA:ACP transacylase (MAT) domain region. Positions 969-1105 (HPLLGSRTPD…GHIRITLAAE (137 aa)) are N-terminal hotdog fold. Positions 969 to 1147 (HPLLGSRTPD…LSYSGPFRAM (179 aa)) are dehydratase (DH) domain. A PKS/mFAS DH domain is found at 969–1276 (HPLLGSRTPD…MSSFLPASEK (308 aa)). The Proton acceptor; for dehydratase activity role is filled by His-1001. The segment at 1120–1276 (DLLPTSVDRF…MSSFLPASEK (157 aa)) is C-terminal hotdog fold. The active-site Proton donor; for dehydratase activity is Asp-1179. The ketoreductase (KR) domain stretch occupies residues 2131–2305 (TYLLVGLTGH…PASVIDIGMV (175 aa)). The 78-residue stretch at 2418 to 2495 (EARKVMENAL…QICDEVVASL (78 aa)) folds into the Carrier 1 domain. An O-(pantetheine 4'-phosphoryl)serine modification is found at Ser-2455. Positions 2513-2550 (PAHKLRPWDKPSADTKRTDSIAPVPRSQIAANGPNGLP) are disordered. Positions 2518–2531 (RPWDKPSADTKRTD) are enriched in basic and acidic residues. A condensation (C) domain region spans residues 2589-2885 (QPLSLGQSRL…LETIPLWFKV (297 aa)). The adenylation (A) domain stretch occupies residues 3076–3478 (TYVQLAERAN…LGDVARALVQ (403 aa)). Residues 3576 to 3652 (TPTEARLRDV…LLAARLDGTS (77 aa)) enclose the Carrier 2 domain. At Ser-3612 the chain carries O-(pantetheine 4'-phosphoryl)serine. The tract at residues 3696-3920 (LTGATGFLGG…INVETVSNNI (225 aa)) is reductase (R) domain.

In the C-terminal section; belongs to the NRP synthetase family.

Its pathway is secondary metabolite biosynthesis. PKS-NRPS hybrid synthetase; part of the gene cluster that mediates the biosynthesis of pseurotin A, a competitive inhibitor of chitin synthase and an inducer of nerve-cell proliferation. The PKS-NRPS hybrid synthetase psoA is responsible for the biosynthesis of azaspirene, one of the first intermediates having the 1-oxa-7-azaspiro[4,4]-non-2-ene-4,6-dione core of pseurotin, via condensation of one acetyl-CoA, 4 malonyl-CoA, and a L-phenylalanine molecule. The dual-functional monooxygenase/methyltransferase psoF seems to be involved in the addition of the C3 methyl group onto the pseurotin scaffold. Azaspirene is then converted to synerazol through 4 steps including oxidation of C17 by the cytochrome P450 monooxygenase psoD, O-methylation of the hydroxy group of C8 by the methyltransferase psoC, and the trans-to-cis isomerization of the C13 olefin by the glutathione S-transferase psoE. The fourth step of synerazol production is performed by the dual-functional monooxygenase/methyltransferase psoF which seems to catalyze the epoxidation of the intermediate deepoxy-synerazol. Synerazol can be attacked by a water molecule nonenzymatically at two different positions to yield two diol products, pseurotin A and pseurotin D. The sequence is that of PKS-NRPS hybrid synthetase psoA from Aspergillus fumigatus (strain ATCC MYA-4609 / CBS 101355 / FGSC A1100 / Af293) (Neosartorya fumigata).